The following is a 305-amino-acid chain: GMP synthase [glutamine-hydrolyzing] subunit B (305 aa).

The 183-residue stretch at 2 to 184 (VNIEKFIDQA…LGLPAEIQHR (183 aa)) folds into the GMPS ATP-PPase domain. 29–35 (SGGVDSS) lines the ATP pocket.

In terms of assembly, heterodimer composed of a glutamine amidotransferase subunit (A) and a GMP-binding subunit (B).

The enzyme catalyses XMP + L-glutamine + ATP + H2O = GMP + L-glutamate + AMP + diphosphate + 2 H(+). It participates in purine metabolism; GMP biosynthesis; GMP from XMP (L-Gln route): step 1/1. Functionally, catalyzes the synthesis of GMP from XMP. The sequence is that of GMP synthase [glutamine-hydrolyzing] subunit B from Methanoculleus marisnigri (strain ATCC 35101 / DSM 1498 / JR1).